Consider the following 1012-residue polypeptide: Axonemal dynein light chain domain-containing protein 1 (1012 aa).

Positions 1–17 are enriched in low complexity; it reads MSLPKTPSTPLNSTSTS. The interval 1–34 is disordered; sequence MSLPKTPSTPLNSTSTSESKKLKVSVAKEGTRGL. Coiled-coil stretches lie at residues 317–402, 447–486, and 572–597; these read QRIL…IWSS, EDLA…IVKD, and SERQ…RING. The span at 841–854 shows a compositional bias: acidic residues; it reads PEIDESFKEDEEES. 2 disordered regions span residues 841 to 879 and 963 to 1012; these read PEID…TEKE and LEEL…KKGH. Composition is skewed to basic and acidic residues over residues 855-879 and 963-987; these read KEDR…TEKE and LEEL…REVK. Positions 988–997 are enriched in acidic residues; sequence EEEEQQEEEE.

In terms of tissue distribution, highly expressed in testis. Highly expressed in the round and late spermatids.

It localises to the cytoplasm. Functionally, may be essential for spermiogenesis and male fertility probably by regulating the manchette dynamics, spermatid head shaping and sperm flagellum assembly. This chain is Axonemal dynein light chain domain-containing protein 1, found in Homo sapiens (Human).